We begin with the raw amino-acid sequence, 188 residues long: Putative adenylate kinase (188 aa).

5 residues coordinate ATP: glycine 10, glycine 12, lysine 13, serine 14, and threonine 15. The NMP stretch occupies residues 30-53 (HVSSFLIQNKAFSEYDELRQSYVI). The LID stretch occupies residues 103–113 (RRGWGELKIAE). Residues arginine 104 and lysine 142 each contribute to the ATP site.

This sequence belongs to the adenylate kinase family. AK6 subfamily. Interacts with uS11. Not a structural component of 40S pre-ribosomes, but transiently interacts with them by binding to uS11.

It carries out the reaction AMP + ATP = 2 ADP. The catalysed reaction is ATP + H2O = ADP + phosphate + H(+). In terms of biological role, broad-specificity nucleoside monophosphate (NMP) kinase that catalyzes the reversible transfer of the terminal phosphate group between nucleoside triphosphates and monophosphates. Also has ATPase activity. Involved in the late maturation steps of the 30S ribosomal particles, specifically 16S rRNA maturation. While NMP activity is not required for ribosome maturation, ATPase activity is. Associates transiently with small ribosomal subunit protein uS11. ATP hydrolysis breaks the interaction with uS11. May temporarily remove uS11 from the ribosome to enable a conformational change of the ribosomal RNA that is needed for the final maturation step of the small ribosomal subunit. In Sulfurisphaera tokodaii (strain DSM 16993 / JCM 10545 / NBRC 100140 / 7) (Sulfolobus tokodaii), this protein is Putative adenylate kinase.